A 286-amino-acid chain; its full sequence is Aspartate/glutamate leucyltransferase (286 aa).

The protein belongs to the R-transferase family. Bpt subfamily.

It is found in the cytoplasm. It carries out the reaction N-terminal L-glutamyl-[protein] + L-leucyl-tRNA(Leu) = N-terminal L-leucyl-L-glutamyl-[protein] + tRNA(Leu) + H(+). It catalyses the reaction N-terminal L-aspartyl-[protein] + L-leucyl-tRNA(Leu) = N-terminal L-leucyl-L-aspartyl-[protein] + tRNA(Leu) + H(+). Its function is as follows. Functions in the N-end rule pathway of protein degradation where it conjugates Leu from its aminoacyl-tRNA to the N-termini of proteins containing an N-terminal aspartate or glutamate. This is Aspartate/glutamate leucyltransferase from Jannaschia sp. (strain CCS1).